The primary structure comprises 271 residues: Digeranylgeranylglyceryl phosphate synthase (271 aa).

8 helical membrane passes run 11–31 (INCAMAALGVVVGELIAGARL), 33–53 (VGAVLAPVVAAVVCAGGNAIN), 88–108 (FAVGVGMATVINRMCLAIAAL), 125–145 (LIGNVMVSYLVGSCFLFGAAV), 149–169 (PAPAVWLFLLAFLANLVREIL), 201–221 (VFAIALAVLTPLPYLDGVVGW), 224–244 (LVLALPAAAVILLASVLAVAG), and 251–271 (AQRVVKVGMLLGLLAFLASLL).

The protein belongs to the UbiA prenyltransferase family. DGGGP synthase subfamily. Mg(2+) serves as cofactor.

It localises to the cell membrane. It catalyses the reaction sn-3-O-(geranylgeranyl)glycerol 1-phosphate + (2E,6E,10E)-geranylgeranyl diphosphate = 2,3-bis-O-(geranylgeranyl)-sn-glycerol 1-phosphate + diphosphate. The protein operates within membrane lipid metabolism; glycerophospholipid metabolism. Prenyltransferase that catalyzes the transfer of the geranylgeranyl moiety of geranylgeranyl diphosphate (GGPP) to the C2 hydroxyl of (S)-3-O-geranylgeranylglyceryl phosphate (GGGP). This reaction is the second ether-bond-formation step in the biosynthesis of archaeal membrane lipids. This Methanopyrus kandleri (strain AV19 / DSM 6324 / JCM 9639 / NBRC 100938) protein is Digeranylgeranylglyceryl phosphate synthase.